We begin with the raw amino-acid sequence, 326 residues long: Protein FAM50 homolog (326 aa).

Residues 76–112 (EISNRDLQVARGASSSTSLAKDSQEAREKEEHVAKHT) are disordered. Over residues 97 to 109 (DSQEAREKEEHVA) the composition is skewed to basic and acidic residues.

It belongs to the FAM50 family.

This chain is Protein FAM50 homolog, found in Caenorhabditis briggsae.